The primary structure comprises 970 residues: ATP-dependent DNA helicase DDX11 (970 aa).

The 437-residue stretch at 9-445 (GAIHFPFPFT…KNLMYLKQIL (437 aa)) folds into the Helicase ATP-binding domain. Position 44-51 (44-51 (SPTGTGKS)) interacts with ATP. Ser262 is subject to Phosphoserine. [4Fe-4S] cluster is bound by residues Cys267 and Cys285. Positions 289–304 (QRSRHEKKKGAEEEKP) are enriched in basic and acidic residues. Residues 289 to 312 (QRSRHEKKKGAEEEKPKRRRQEKQ) are disordered. 2 residues coordinate [4Fe-4S] cluster: Cys315 and Cys350. The DEAH box motif lies at 393–396 (DEAH). Residues 818-849 (TLSPRPGTPREGSGGEPVHEGRQPVHRQGHQA) are disordered.

It belongs to the DEAD box helicase family. DEAH subfamily. DDX11/CHL1 sub-subfamily. In terms of assembly, associates with the CTF18-RFC complex. Associates with a cohesin complex composed of RAD21, SMC1 proteins and SMC3. Interacts with CHTF18. Interacts with DSCC1. Interacts with FEN1; this interaction is direct and increases flap endonuclease activity of FEN1. Interacts with PCNA. Interacts with POLR1A and UBTF. Interacts with RAD21, SMC1 proteins and SMC3. Interacts with RFC2. Interacts with TIMELESS; this interaction increases recruitment of both proteins onto chromatin in response to replication stress induction by hydroxyurea. (Microbial infection) Interacts with bovine papillomavirus type 1 regulatory protein E2; this interaction stimulates the recruitment of E2 onto mitotic chromosomes. Mg(2+) is required as a cofactor. Requires [4Fe-4S] cluster as cofactor. As to expression, expressed in melanoma cells. Not detected in epidermal melanocytes of normal skin (at protein level). Highly expressed in spleen, B-cells, thymus, testis, ovary, small intestine and pancreas. Very low expression seen in brain. Expressed in dividing cells and/or cells undergoing high levels of recombination. No expression detected in cells signaled to terminally differentiate. Expressed weakly in keratinocytes.

Its subcellular location is the nucleus. It localises to the nucleolus. It is found in the cytoplasm. The protein localises to the cytoskeleton. The protein resides in the spindle pole. Its subcellular location is the midbody. It localises to the microtubule organizing center. It is found in the centrosome. The protein localises to the chromosome. It carries out the reaction Couples ATP hydrolysis with the unwinding of duplex DNA at the replication fork by translocating in the 5'-3' direction. This creates two antiparallel DNA single strands (ssDNA). The leading ssDNA polymer is the template for DNA polymerase III holoenzyme which synthesizes a continuous strand.. The catalysed reaction is ATP + H2O = ADP + phosphate + H(+). Its activity is regulated as follows. ATPase activity is stimulated by high magnesium salt levels (up to a 0.1 M), and potassium salts (glutamate, chloride or acetate) are more effective than the corresponding sodium salts. ATPase activity is enhanced by the long non-coding RNA (lncRNA) cohesion regulator noncoding RNA (CONCR). Double-stranded DNA helicase activity is maximal with magnesium ions at low concentrations (0.5-1 mM) whereas is markedly inhibited at higher levels (5 mM and above). Double-stranded DNA helicase activity is stimulated by 25-50 mM potassium acetate, stimulated to a lesser extent by 25 mM of ammonium acetate, and markedly inhibited by sodium acetate. Its function is as follows. DNA-dependent ATPase and ATP-dependent DNA helicase that participates in various functions in genomic stability, including DNA replication, DNA repair and heterochromatin organization as well as in ribosomal RNA synthesis. Its double-stranded DNA helicase activity requires either a minimal 5'-single-stranded tail length of approximately 15 nt (flap substrates) or 10 nt length single-stranded gapped DNA substrates of a partial duplex DNA structure for helicase loading and translocation along DNA in a 5' to 3' direction. The helicase activity is capable of displacing duplex regions up to 100 bp, which can be extended up to 500 bp by the replication protein A (RPA) or the cohesion CTF18-replication factor C (Ctf18-RFC) complex activities. Also shows ATPase- and helicase activities on substrates that mimic key DNA intermediates of replication, repair and homologous recombination reactions, including forked duplex, anti-parallel G-quadruplex and three-stranded D-loop DNA molecules. Plays a role in DNA double-strand break (DSB) repair at the DNA replication fork during DNA replication recovery from DNA damage. Recruited with TIMELESS factor upon DNA-replication stress response at DNA replication fork to preserve replication fork progression, and hence ensure DNA replication fidelity. Also cooperates with TIMELESS factor during DNA replication to regulate proper sister chromatid cohesion and mitotic chromosome segregation. Stimulates 5'-single-stranded DNA flap endonuclease activity of FEN1 in an ATP- and helicase-independent manner; and hence it may contribute in Okazaki fragment processing at DNA replication fork during lagging strand DNA synthesis. Its ability to function at DNA replication fork is modulated by its binding to long non-coding RNA (lncRNA) cohesion regulator non-coding RNA DDX11-AS1/CONCR, which is able to increase both DDX11 ATPase activity and binding to DNA replicating regions. Also plays a role in heterochromatin organization. Involved in rRNA transcription activation through binding to active hypomethylated rDNA gene loci by recruiting UBTF and the RNA polymerase Pol I transcriptional machinery. Plays a role in embryonic development and prevention of aneuploidy. Involved in melanoma cell proliferation and survival. Associates with chromatin at DNA replication fork regions. Binds to single- and double-stranded DNAs. In terms of biological role, (Microbial infection) Required for bovine papillomavirus type 1 regulatory protein E2 loading onto mitotic chromosomes during DNA replication for the viral genome to be maintained and segregated. In Homo sapiens (Human), this protein is ATP-dependent DNA helicase DDX11.